The primary structure comprises 434 residues: D-amino acid dehydrogenase (434 aa).

Position 3 to 17 (3 to 17 (VLVLGSGVIGTASAY)) interacts with FAD.

It belongs to the DadA oxidoreductase family. Requires FAD as cofactor.

The catalysed reaction is a D-alpha-amino acid + A + H2O = a 2-oxocarboxylate + AH2 + NH4(+). Its pathway is amino-acid degradation; D-alanine degradation; NH(3) and pyruvate from D-alanine: step 1/1. Oxidative deamination of D-amino acids. This chain is D-amino acid dehydrogenase, found in Pseudomonas putida (strain ATCC 700007 / DSM 6899 / JCM 31910 / BCRC 17059 / LMG 24140 / F1).